A 101-amino-acid chain; its full sequence is Large ribosomal subunit protein eL43 (101 aa).

Zn(2+) is bound by residues cysteine 40, cysteine 43, cysteine 59, and cysteine 62. Residues 40 to 62 (CPSCRSLVRLERIAFGIWRCPKC) form a C4-type zinc finger.

This sequence belongs to the eukaryotic ribosomal protein eL43 family. Putative zinc-binding subfamily. In terms of assembly, part of the 50S ribosomal subunit. Zn(2+) is required as a cofactor.

Functionally, binds to the 23S rRNA. This chain is Large ribosomal subunit protein eL43, found in Pyrobaculum aerophilum (strain ATCC 51768 / DSM 7523 / JCM 9630 / CIP 104966 / NBRC 100827 / IM2).